A 76-amino-acid polypeptide reads, in one-letter code: Putative snRNP Sm-like protein (76 aa).

In terms of domain architecture, Sm spans 4-76 (RPLDVIHKSL…VLALSPVELE (73 aa)).

It belongs to the snRNP Sm proteins family.

The sequence is that of Putative snRNP Sm-like protein from Thermococcus kodakarensis (strain ATCC BAA-918 / JCM 12380 / KOD1) (Pyrococcus kodakaraensis (strain KOD1)).